Reading from the N-terminus, the 811-residue chain is Bifunctional enzyme MurC/Ddl (811 aa).

The segment at 1 to 450 (MNRKNHYHFI…GNALKDFEPK (450 aa)) is UDP-N-acetylmuramate--alanine ligase. Residues 111–117 (GSHGKTT) and 607–662 (LETF…SREI) each bind ATP. The tract at residues 451–811 (KLSVGVVCGG…NKQCLLTAKS (361 aa)) is D-alanine--D-alanine ligase. One can recognise an ATP-grasp domain in the interval 574–785 (KRLAASVGVP…FEQIVHQLII (212 aa)). Positions 739, 752, and 754 each coordinate Mg(2+).

In the N-terminal section; belongs to the MurCDEF family. This sequence in the C-terminal section; belongs to the D-alanine--D-alanine ligase family. The cofactor is Mg(2+). Mn(2+) is required as a cofactor.

The protein localises to the cytoplasm. It carries out the reaction UDP-N-acetyl-alpha-D-muramate + L-alanine + ATP = UDP-N-acetyl-alpha-D-muramoyl-L-alanine + ADP + phosphate + H(+). The enzyme catalyses 2 D-alanine + ATP = D-alanyl-D-alanine + ADP + phosphate + H(+). The protein operates within cell wall biogenesis; peptidoglycan biosynthesis. In Chlamydia caviae (strain ATCC VR-813 / DSM 19441 / 03DC25 / GPIC) (Chlamydophila caviae), this protein is Bifunctional enzyme MurC/Ddl (murC/ddlA).